Consider the following 267-residue polypeptide: Methyl-coenzyme M reductase II subunit gamma (267 aa).

Position 123 (R123) interacts with coenzyme M.

This sequence belongs to the methyl-coenzyme M reductase gamma subunit family. MCR is a hexamer of two alpha, two beta, and two gamma chains, forming a dimer of heterotrimers. It depends on coenzyme F430 as a cofactor.

The catalysed reaction is coenzyme B + methyl-coenzyme M = methane + coenzyme M-coenzyme B heterodisulfide. It functions in the pathway one-carbon metabolism; methyl-coenzyme M reduction; methane from methyl-coenzyme M: step 1/1. In terms of biological role, component of the methyl-coenzyme M reductase (MCR) I that catalyzes the reductive cleavage of methyl-coenzyme M (CoM-S-CH3 or 2-(methylthio)ethanesulfonate) using coenzyme B (CoB or 7-mercaptoheptanoylthreonine phosphate) as reductant which results in the production of methane and the mixed heterodisulfide of CoB and CoM (CoM-S-S-CoB). This is the final step in methanogenesis. In Methanothermus fervidus (strain ATCC 43054 / DSM 2088 / JCM 10308 / V24 S), this protein is Methyl-coenzyme M reductase II subunit gamma (mrtG).